Consider the following 118-residue polypeptide: Large ribosomal subunit protein bL20 (118 aa).

It belongs to the bacterial ribosomal protein bL20 family.

Its function is as follows. Binds directly to 23S ribosomal RNA and is necessary for the in vitro assembly process of the 50S ribosomal subunit. It is not involved in the protein synthesizing functions of that subunit. This chain is Large ribosomal subunit protein bL20 (rplT), found in Aquifex aeolicus (strain VF5).